The primary structure comprises 306 residues: Large ribosomal subunit protein uL18 (306 aa).

It belongs to the universal ribosomal protein uL18 family. Component of the large ribosomal subunit (LSU).

The protein localises to the cytoplasm. Its subcellular location is the nucleus. Its function is as follows. Component of the ribosome, a large ribonucleoprotein complex responsible for the synthesis of proteins in the cell. The small ribosomal subunit (SSU) binds messenger RNAs (mRNAs) and translates the encoded message by selecting cognate aminoacyl-transfer RNA (tRNA) molecules. The large subunit (LSU) contains the ribosomal catalytic site termed the peptidyl transferase center (PTC), which catalyzes the formation of peptide bonds, thereby polymerizing the amino acids delivered by tRNAs into a polypeptide chain. The nascent polypeptides leave the ribosome through a tunnel in the LSU and interact with protein factors that function in enzymatic processing, targeting, and the membrane insertion of nascent chains at the exit of the ribosomal tunnel. The sequence is that of Large ribosomal subunit protein uL18 (RPL5) from Theileria annulata.